Here is a 271-residue protein sequence, read N- to C-terminus: Probable CAAX prenyl protease 2 (271 aa).

A run of 2 helical transmembrane segments spans residues 3 to 23 and 42 to 62; these read VYLISFFFTAIYVVSLYTFPV and CISVLLASSVCCILTRLIIGP. Active-site proton donor/acceptor residues include Glu-126 and His-160. A run of 2 helical transmembrane segments spans residues 174–194 and 236–256; these read AYIAAALQTVVQFSYTTVFGW and IYYTLLLLGVLIFYMTWGITD.

Belongs to the peptidase U48 family.

Its subcellular location is the endoplasmic reticulum membrane. The enzyme catalyses Hydrolyzes the peptide bond -P2-(S-farnesyl or geranylgeranyl)C-P1'-P2'-P3'-COOH where P1' and P2' are amino acids with aliphatic sidechains and P3' is any C-terminal residue.. In terms of biological role, protease involved in the processing of a variety of prenylated proteins containing the C-terminal CAAX motif, where C is a cysteine modified with an isoprenoid lipid, A is an aliphatic amino acid and X is any C-terminal amino acid. Proteolytically removes the C-terminal three residues of farnesylated proteins, leaving the prenylated cysteine as the new C-terminus. The protein is Probable CAAX prenyl protease 2 of Schizosaccharomyces pombe (strain 972 / ATCC 24843) (Fission yeast).